The following is a 136-amino-acid chain: Ribosome-binding factor A (136 aa).

The tract at residues 114-136 is disordered; sequence DRANRPGPAADEPDEPDEPEDRR. Positions 124–136 are enriched in acidic residues; that stretch reads DEPDEPDEPEDRR.

It belongs to the RbfA family. Monomer. Binds 30S ribosomal subunits, but not 50S ribosomal subunits or 70S ribosomes.

The protein localises to the cytoplasm. In terms of biological role, one of several proteins that assist in the late maturation steps of the functional core of the 30S ribosomal subunit. Associates with free 30S ribosomal subunits (but not with 30S subunits that are part of 70S ribosomes or polysomes). Required for efficient processing of 16S rRNA. May interact with the 5'-terminal helix region of 16S rRNA. This Bordetella petrii (strain ATCC BAA-461 / DSM 12804 / CCUG 43448) protein is Ribosome-binding factor A.